The following is a 537-amino-acid chain: Copine-3 (537 aa).

C2 domains lie at Met1–Leu115 and Gly124–Phe247. Ser14 is modified (phosphoserine). 7 residues coordinate Ca(2+): Asp22, Asp28, Asp81, Asp83, Asp93, Asp154, and Asp160. Ser197 carries the phosphoserine modification. Residues Asp216, Asp218, and Asp224 each coordinate Ca(2+). A Phosphoserine modification is found at Ser243. The 223-residue stretch at Asn291–Gln513 folds into the VWFA domain.

Belongs to the copine family. As to quaternary structure, monomer. Interacts with ERBB2 (preferentially with the tyrosine phosphorylated form); this interaction occurs at the cell membrane and is increased in a growth factor heregulin-dependent manner. Interacts with SHC1; this interaction may mediate the binding of CPNE3 with ERBB2. Interacts with RACK1. Requires Ca(2+) as cofactor. In terms of processing, phosphorylated on serine and threonine residues. As to expression, expressed in breast and weakly in prostate and ovarian tissues. Expressed in neutrophils (at protein level). Widely expressed. Expressed in the brain. Expressed in neutrophil precursors from the bone marrow and peripheral blood. Expressed in primary breast tumors and ovarian endometrioid adenocarcinoma.

The protein localises to the nucleus. It is found in the cytoplasm. It localises to the cell membrane. Its subcellular location is the cell junction. The protein resides in the focal adhesion. Its function is as follows. Calcium-dependent phospholipid-binding protein that plays a role in ERBB2-mediated tumor cell migration in response to growth factor heregulin stimulation. This is Copine-3 from Homo sapiens (Human).